Here is an 851-residue protein sequence, read N- to C-terminus: MDIRKEYLEFFRSKGHEVISSMPLVPDDPTLMFTNAGMVQFKDIFTGAVPTPKNKRATSCQLCVRAGGKHNDLENVGYTARHHTLFEMLGNFSFGDYFKEDAIAYAWEFVTVNLALPIDKLWVTVHNNDDEAFDIWSKYINPSRIMRFGDKDNFWSMGDTGACGPCSEIFYDQGEENFNGEEDYMGGDGDRFLEIWNLVFMQYERTADGKLNPLPKPSIDTGMGLERVIAIKEGVFNNFDSSNFKPIIKKIEEISSKNATSENIGSYRVIADHLRACSFMLSQGILFGNEGRPYVLRRILRRAVRHGYLIGFRKPFMAKLLDTLIEIMGGHYTELVENKNFIEEQLTLEEDRFFKTIDLGMSLFNEELEKTKDIFSGVTAFKLYDTYGFPLDLTEDMLRDRGLKVDLAKFDELMNNQKAMAKAAWKGSGDTSNEGDFKQLLEKFGSNEFVGYNNTTYKSKIIALLDEHFKEVKILEKDSTGWVMLDKTPFYATSGGQNGDIGALEDNKHIAIVEETTKFHGLNLSKVKVVNSSLKQGESVDAIVVNRNEVAKHHSATHLLQSALKIVLGDTVSQAGSLNDASRLRFDFTYPKAMTKEQIDEVEDLVNSMIARGISGNVEELPIEQAKKKGAIAMFGEKYGDVVRVVSFEDVSVEFCGGTHVRNTADIGSFYIVKESGVSAGVRRIEAVCGTAAIKYTKDIISKMNEIQAEVKNSDVILGIKKLKEQIKDLKKEIETSQSKTSSPIEETIINDTKVIVSVVENGDLKKIVDDTKNANEKVAIFLLQAKDDKVLIVAGSKNTNIKAGDWIKNIAPIVGGGGGGRPDFAQAGGKDTSKIQEAKTKALDYAKENL.

4 residues coordinate Zn(2+): His554, His558, Cys656, and His660.

The protein belongs to the class-II aminoacyl-tRNA synthetase family. Zn(2+) is required as a cofactor.

It localises to the cytoplasm. It carries out the reaction tRNA(Ala) + L-alanine + ATP = L-alanyl-tRNA(Ala) + AMP + diphosphate. Functionally, catalyzes the attachment of alanine to tRNA(Ala) in a two-step reaction: alanine is first activated by ATP to form Ala-AMP and then transferred to the acceptor end of tRNA(Ala). Also edits incorrectly charged Ser-tRNA(Ala) and Gly-tRNA(Ala) via its editing domain. This is Alanine--tRNA ligase from Aliarcobacter butzleri (strain RM4018) (Arcobacter butzleri).